Here is a 376-residue protein sequence, read N- to C-terminus: Succinyl-diaminopimelate desuccinylase (376 aa).

H64 contacts Zn(2+). Residue D66 is part of the active site. D97 provides a ligand contact to Zn(2+). Residue E131 is the Proton acceptor of the active site. Zn(2+)-binding residues include E132, E160, and H347.

This sequence belongs to the peptidase M20A family. DapE subfamily. Homodimer. Requires Zn(2+) as cofactor. Co(2+) serves as cofactor.

It carries out the reaction N-succinyl-(2S,6S)-2,6-diaminopimelate + H2O = (2S,6S)-2,6-diaminopimelate + succinate. The protein operates within amino-acid biosynthesis; L-lysine biosynthesis via DAP pathway; LL-2,6-diaminopimelate from (S)-tetrahydrodipicolinate (succinylase route): step 3/3. Functionally, catalyzes the hydrolysis of N-succinyl-L,L-diaminopimelic acid (SDAP), forming succinate and LL-2,6-diaminopimelate (DAP), an intermediate involved in the bacterial biosynthesis of lysine and meso-diaminopimelic acid, an essential component of bacterial cell walls. The polypeptide is Succinyl-diaminopimelate desuccinylase (Wigglesworthia glossinidia brevipalpis).